The following is a 158-amino-acid chain: 2-C-methyl-D-erythritol 2,4-cyclodiphosphate synthase (158 aa).

D8 and H10 together coordinate a divalent metal cation. Residues 8–10 (DSH) and 34–35 (HS) contribute to the 4-CDP-2-C-methyl-D-erythritol 2-phosphate site. H42 contacts a divalent metal cation. 4-CDP-2-C-methyl-D-erythritol 2-phosphate is bound by residues 56-58 (DIG), 61-65 (FPDND), and R142.

It belongs to the IspF family. As to quaternary structure, homotrimer. A divalent metal cation serves as cofactor.

It catalyses the reaction 4-CDP-2-C-methyl-D-erythritol 2-phosphate = 2-C-methyl-D-erythritol 2,4-cyclic diphosphate + CMP. Its pathway is isoprenoid biosynthesis; isopentenyl diphosphate biosynthesis via DXP pathway; isopentenyl diphosphate from 1-deoxy-D-xylulose 5-phosphate: step 4/6. Its function is as follows. Involved in the biosynthesis of isopentenyl diphosphate (IPP) and dimethylallyl diphosphate (DMAPP), two major building blocks of isoprenoid compounds. Catalyzes the conversion of 4-diphosphocytidyl-2-C-methyl-D-erythritol 2-phosphate (CDP-ME2P) to 2-C-methyl-D-erythritol 2,4-cyclodiphosphate (ME-CPP) with a corresponding release of cytidine 5-monophosphate (CMP). The polypeptide is 2-C-methyl-D-erythritol 2,4-cyclodiphosphate synthase (Brachyspira hyodysenteriae (strain ATCC 49526 / WA1)).